The primary structure comprises 596 residues: uncharacterized protein (596 aa).

A Helicase ATP-binding domain is found at 44 to 203 (KYLASQPRDF…PFVTYALDAD (160 aa)). The 148-residue stretch at 285–432 (RLRQLRTHVP…PHRESTDNPL (148 aa)) folds into the Helicase C-terminal domain. Disordered stretches follow at residues 420-444 (LGKP…QTEQ) and 506-533 (EQLQ…SVHG). The span at 510–523 (KRTAAQQASSTPDR) shows a compositional bias: polar residues.

It to M.tuberculosis Rv2917.

This is an uncharacterized protein from Mycobacterium leprae (strain TN).